A 408-amino-acid polypeptide reads, in one-letter code: Imidazolonepropionase (408 aa).

Fe(3+) is bound by residues His73 and His75. Positions 73 and 75 each coordinate Zn(2+). 4-imidazolone-5-propanoate is bound by residues Arg82, Tyr145, and His178. Tyr145 contacts N-formimidoyl-L-glutamate. His243 contacts Fe(3+). His243 lines the Zn(2+) pocket. Position 246 (Gln246) interacts with 4-imidazolone-5-propanoate. Residue Asp318 coordinates Fe(3+). Asp318 serves as a coordination point for Zn(2+). Asn320 and Gly322 together coordinate N-formimidoyl-L-glutamate. Ser323 lines the 4-imidazolone-5-propanoate pocket.

Belongs to the metallo-dependent hydrolases superfamily. HutI family. Zn(2+) serves as cofactor. The cofactor is Fe(3+).

Its subcellular location is the cytoplasm. It carries out the reaction 4-imidazolone-5-propanoate + H2O = N-formimidoyl-L-glutamate. Its pathway is amino-acid degradation; L-histidine degradation into L-glutamate; N-formimidoyl-L-glutamate from L-histidine: step 3/3. In terms of biological role, catalyzes the hydrolytic cleavage of the carbon-nitrogen bond in imidazolone-5-propanoate to yield N-formimidoyl-L-glutamate. It is the third step in the universal histidine degradation pathway. This chain is Imidazolonepropionase, found in Shewanella baltica (strain OS185).